A 267-amino-acid polypeptide reads, in one-letter code: Phosphate import ATP-binding protein PstB (267 aa).

Residues 21 to 262 (VAARNLDFYY…PSKQQTEDYI (242 aa)) enclose the ABC transporter domain. An ATP-binding site is contributed by 53 to 60 (GPSGCGKS).

It belongs to the ABC transporter superfamily. Phosphate importer (TC 3.A.1.7) family. The complex is composed of two ATP-binding proteins (PstB), two transmembrane proteins (PstC and PstA) and a solute-binding protein (PstS).

It is found in the cell inner membrane. The catalysed reaction is phosphate(out) + ATP + H2O = ADP + 2 phosphate(in) + H(+). Its function is as follows. Part of the ABC transporter complex PstSACB involved in phosphate import. Responsible for energy coupling to the transport system. This Xanthomonas oryzae pv. oryzae (strain MAFF 311018) protein is Phosphate import ATP-binding protein PstB.